The sequence spans 116 residues: Beta-2-microglobulin (116 aa).

Positions 1-19 (MRAIITFALFCVLYITVQA) are cleaved as a signal peptide. Residues 24-111 (PKVQVYSHFP…RHMSNTNAYS (88 aa)) enclose the Ig-like C1-type domain. Cysteines 44 and 99 form a disulfide.

Belongs to the beta-2-microglobulin family. In terms of assembly, heterodimer of an alpha chain and a beta chain. Beta-2-microglobulin is the beta-chain of major histocompatibility complex class I molecules.

The protein resides in the secreted. In terms of biological role, component of the class I major histocompatibility complex (MHC). Involved in the presentation of peptide antigens to the immune system. The sequence is that of Beta-2-microglobulin (b2m) from Labeobarbus intermedius (Lake tana barbels).